Consider the following 344-residue polypeptide: Phosphate acyltransferase (344 aa).

It belongs to the PlsX family. In terms of assembly, homodimer. Probably interacts with PlsY.

It is found in the cytoplasm. It catalyses the reaction a fatty acyl-[ACP] + phosphate = an acyl phosphate + holo-[ACP]. It functions in the pathway lipid metabolism; phospholipid metabolism. Catalyzes the reversible formation of acyl-phosphate (acyl-PO(4)) from acyl-[acyl-carrier-protein] (acyl-ACP). This enzyme utilizes acyl-ACP as fatty acyl donor, but not acyl-CoA. This chain is Phosphate acyltransferase, found in Sodalis glossinidius (strain morsitans).